Here is a 558-residue protein sequence, read N- to C-terminus: Suppressor of zyg-1 protein 20 (558 aa).

An SUZ domain is found at 45–146 (KVKAEESSGV…ARNRILGTEY (102 aa)). 3 disordered regions span residues 50–132 (ESSG…ERQA), 205–241 (FTQP…QQSL), and 374–558 (QRNQ…NRPQ). Positions 69 to 81 (EEPKRVFLRRPKD) are enriched in basic and acidic residues. Residues 94–109 (PPTSADTEEQPVTNVR) are compositionally biased toward polar residues. A compositionally biased stretch (basic and acidic residues) spans 117–131 (NQKEKQPAPTYEERQ). Low complexity-rich tracts occupy residues 374 to 394 (QRNQ…QNRQ) and 424 to 477 (NNGQ…QQQQ). 2 stretches are compositionally biased toward polar residues: residues 478-508 (NKSG…SQNP) and 545-558 (SASQ…NRPQ).

As to quaternary structure, interacts (via C-terminus) with atx-2 (via C-terminus); the interaction is RNA independent. Interacts with let-92. In terms of processing, phosphorylated. May be dephosphorylated by let-92.

The protein resides in the cytoplasm. It is found in the cytoskeleton. The protein localises to the microtubule organizing center. It localises to the centrosome. Its subcellular location is the centriole. The protein resides in the nucleus. It is found in the nucleolus. The protein localises to the chromosome. Its function is as follows. RNA binding protein that is required for normal cell division and cytokinesis during embryonic development. Functions with RNA-binding protein atx-2 to ensure embryonic cell division, and to this end, plays a role in the regulation of centrosome assembly, position and size, and in astral microtubule outgrowth and nucleation. Furthermore, negatively regulates the levels of the protein kinase zyg-1 at the centrosome. Also involved in ensuring centrosome attachment to the nuclear envelope. The chain is Suppressor of zyg-1 protein 20 from Caenorhabditis elegans.